The sequence spans 185 residues: Large ribosomal subunit protein uL5 (185 aa).

It belongs to the universal ribosomal protein uL5 family. In terms of assembly, part of the 50S ribosomal subunit; part of the 5S rRNA/L5/L18/L25 subcomplex. Contacts the 5S rRNA and the P site tRNA. Forms a bridge to the 30S subunit in the 70S ribosome.

Its function is as follows. This is one of the proteins that bind and probably mediate the attachment of the 5S RNA into the large ribosomal subunit, where it forms part of the central protuberance. In the 70S ribosome it contacts protein S13 of the 30S subunit (bridge B1b), connecting the 2 subunits; this bridge is implicated in subunit movement. Contacts the P site tRNA; the 5S rRNA and some of its associated proteins might help stabilize positioning of ribosome-bound tRNAs. This Bartonella bacilliformis (strain ATCC 35685 / KC583 / Herrer 020/F12,63) protein is Large ribosomal subunit protein uL5.